The chain runs to 425 residues: GTPase Obg (425 aa).

In terms of domain architecture, Obg spans 1–158; that stretch reads MFIDKAKIYV…REIILELKLL (158 aa). An OBG-type G domain is found at 159–331; the sequence is ADVGLVGFPN…LMAEVSKTLA (173 aa). GTP-binding positions include 165–172, 190–194, 212–215, 282–285, and 312–314; these read GFPNVGKS, FTTLK, DIPG, NKSD, and SAA. Residues Ser-172 and Thr-192 each contribute to the Mg(2+) site. The 81-residue stretch at 345–425 folds into the OCT domain; the sequence is LFIPEEKRFT…LNDFEFEFVI (81 aa).

Belongs to the TRAFAC class OBG-HflX-like GTPase superfamily. OBG GTPase family. In terms of assembly, monomer. The cofactor is Mg(2+).

Its subcellular location is the cytoplasm. In terms of biological role, an essential GTPase which binds GTP, GDP and possibly (p)ppGpp with moderate affinity, with high nucleotide exchange rates and a fairly low GTP hydrolysis rate. Plays a role in control of the cell cycle, stress response, ribosome biogenesis and in those bacteria that undergo differentiation, in morphogenesis control. The polypeptide is GTPase Obg (Clostridium tetani (strain Massachusetts / E88)).